A 312-amino-acid chain; its full sequence is Aspartate carbamoyltransferase catalytic subunit (312 aa).

Carbamoyl phosphate contacts are provided by Arg58 and Thr59. Lys86 provides a ligand contact to L-aspartate. Carbamoyl phosphate is bound by residues Arg108, His136, and Gln139. The L-aspartate site is built by Arg169 and Arg223. The carbamoyl phosphate site is built by Gly264 and Pro265.

This sequence belongs to the aspartate/ornithine carbamoyltransferase superfamily. ATCase family. As to quaternary structure, heterododecamer (2C3:3R2) of six catalytic PyrB chains organized as two trimers (C3), and six regulatory PyrI chains organized as three dimers (R2).

It carries out the reaction carbamoyl phosphate + L-aspartate = N-carbamoyl-L-aspartate + phosphate + H(+). Its pathway is pyrimidine metabolism; UMP biosynthesis via de novo pathway; (S)-dihydroorotate from bicarbonate: step 2/3. In terms of biological role, catalyzes the condensation of carbamoyl phosphate and aspartate to form carbamoyl aspartate and inorganic phosphate, the committed step in the de novo pyrimidine nucleotide biosynthesis pathway. This Endomicrobium trichonymphae protein is Aspartate carbamoyltransferase catalytic subunit.